The primary structure comprises 90 residues: Auxin-responsive protein SAUR22 (90 aa).

It belongs to the ARG7 family.

Its subcellular location is the cell membrane. Functions as a positive effector of cell expansion through modulation of auxin transport. This is Auxin-responsive protein SAUR22 from Arabidopsis thaliana (Mouse-ear cress).